We begin with the raw amino-acid sequence, 506 residues long: Trans-cinnamate 4-monooxygenase (506 aa).

The chain crosses the membrane as a helical span at residues 3-23 (DFVLLEKALLGLFIATIVAIT). (E)-cinnamate-binding positions include 214-219 (RSRLAQ) and A307. Heme is bound at residue C448.

It belongs to the cytochrome P450 family. Heme is required as a cofactor.

It localises to the membrane. The catalysed reaction is (E)-cinnamate + reduced [NADPH--hemoprotein reductase] + O2 = (E)-4-coumarate + oxidized [NADPH--hemoprotein reductase] + H2O + H(+). Its pathway is phenylpropanoid metabolism; trans-4-coumarate biosynthesis; trans-4-coumarate from trans-cinnamate: step 1/1. Catalyzes the first oxidative step of the phenylpropanoid pathway in higher plants by transforming trans-cinnamate into p-coumarate. The compounds formed by this pathway are essential components for lignification, pollination, and defense against ultraviolet light, predators and pathogens. The protein is Trans-cinnamate 4-monooxygenase (CYP73A10) of Petroselinum crispum (Parsley).